Here is a 468-residue protein sequence, read N- to C-terminus: ATP synthase subunit beta (468 aa).

155 to 162 (GGAGVGKT) is a binding site for ATP.

This sequence belongs to the ATPase alpha/beta chains family. In terms of assembly, F-type ATPases have 2 components, CF(1) - the catalytic core - and CF(0) - the membrane proton channel. CF(1) has five subunits: alpha(3), beta(3), gamma(1), delta(1), epsilon(1). CF(0) has three main subunits: a(1), b(2) and c(9-12). The alpha and beta chains form an alternating ring which encloses part of the gamma chain. CF(1) is attached to CF(0) by a central stalk formed by the gamma and epsilon chains, while a peripheral stalk is formed by the delta and b chains.

The protein localises to the cell membrane. The enzyme catalyses ATP + H2O + 4 H(+)(in) = ADP + phosphate + 5 H(+)(out). In terms of biological role, produces ATP from ADP in the presence of a proton gradient across the membrane. The catalytic sites are hosted primarily by the beta subunits. This chain is ATP synthase subunit beta, found in Streptococcus thermophilus (strain CNRZ 1066).